A 1015-amino-acid polypeptide reads, in one-letter code: Putative calcium-transporting ATPase 7, plasma membrane-type (1015 aa).

At Met-1 the chain carries N-acetylmethionine. Residues 1–161 are Cytoplasmic-facing; sequence MESYLNSNFD…NKFAESELRS (161 aa). The interaction with calmodulin stretch occupies residues 20–31; that stretch reads VLEKWRNLCSVV. Residue Ser-45 is modified to Phosphoserine; by CPK. The chain crosses the membrane as a helical span at residues 162–182; it reads FWVFVWEALQDMTLMILGVCA. Over 183–200 the chain is Lumenal; that stretch reads FVSLIVGIATEGWPQGSH. Residues 201-221 traverse the membrane as a helical segment; it reads DGLGIVASILLVVFVTATSDY. Residues 222-349 lie on the Cytoplasmic side of the membrane; the sequence is RQSLQFRDLD…DDETPLQVKL (128 aa). A helical transmembrane segment spans residues 350 to 369; sequence NGVATIIGKIGLSFAIVTFA. Residues 370–399 lie on the Lumenal side of the membrane; sequence VLVQGMFMRKLSLGPHWWWSGDDALELLEY. The helical transmembrane segment at 400-417 threads the bilayer; the sequence is FAIAVTIVVVAVPEGLPL. Over 418-811 the chain is Cytoplasmic; sequence AVTLSLAFAM…KWGRSVYINI (394 aa). Asp-455 functions as the 4-aspartylphosphate intermediate in the catalytic mechanism. Mg(2+)-binding residues include Asp-756 and Asp-760. The helical transmembrane segment at 812 to 830 threads the bilayer; it reads QKFVQFQLTVNVVALIVNF. Over 831–841 the chain is Lumenal; that stretch reads SSACLTGSAPL. The helical transmembrane segment at 842-862 threads the bilayer; the sequence is TAVQLLWVNMIMDTLGALALA. Residues 863-882 lie on the Cytoplasmic side of the membrane; it reads TEPPNNELMKRMPVGRRGNF. Residues 883 to 905 traverse the membrane as a helical segment; that stretch reads ITNAMWRNILGQAVYQFIIIWIL. The Lumenal portion of the chain corresponds to 906-917; the sequence is QAKGKSMFGLVG. The helical transmembrane segment at 918 to 939 threads the bilayer; the sequence is SDSTLVLNTLIFNCFVFCQVFN. Topologically, residues 940-957 are cytoplasmic; it reads EVSSREMEEIDVFKGILD. Residues 958–979 traverse the membrane as a helical segment; the sequence is NYVFVVVIGATVFFQIIIIEFL. Topologically, residues 980–989 are lumenal; the sequence is GTFASTTPLT. A helical transmembrane segment spans residues 990-1011; it reads IVQWFFSIFVGFLGMPIAAGLK. Topologically, residues 1012–1015 are cytoplasmic; sequence KIPV.

This sequence belongs to the cation transport ATPase (P-type) (TC 3.A.3) family. Type IIB subfamily.

The protein resides in the membrane. The enzyme catalyses Ca(2+)(in) + ATP + H2O = Ca(2+)(out) + ADP + phosphate + H(+). Its activity is regulated as follows. Activated by calmodulin. This magnesium-dependent enzyme catalyzes the hydrolysis of ATP coupled with the translocation of calcium from the cytosol out of the cell or into organelles. The protein is Putative calcium-transporting ATPase 7, plasma membrane-type (ACA7) of Arabidopsis thaliana (Mouse-ear cress).